The primary structure comprises 345 residues: Aspartate-semialdehyde dehydrogenase (345 aa).

NADP(+) contacts are provided by residues 11-14 and 39-40; these read TGQV and RS. Arginine 99 is a binding site for phosphate. The active-site Acyl-thioester intermediate is cysteine 130. Glutamine 157 contacts substrate. Residue 160–161 participates in NADP(+) binding; that stretch reads SG. Lysine 227 contacts phosphate. Arginine 249 is a substrate binding site. Histidine 256 functions as the Proton acceptor in the catalytic mechanism. Asparagine 325 serves as a coordination point for NADP(+).

Belongs to the aspartate-semialdehyde dehydrogenase family. As to quaternary structure, homodimer.

It carries out the reaction L-aspartate 4-semialdehyde + phosphate + NADP(+) = 4-phospho-L-aspartate + NADPH + H(+). The protein operates within amino-acid biosynthesis; L-lysine biosynthesis via DAP pathway; (S)-tetrahydrodipicolinate from L-aspartate: step 2/4. Its pathway is amino-acid biosynthesis; L-methionine biosynthesis via de novo pathway; L-homoserine from L-aspartate: step 2/3. It functions in the pathway amino-acid biosynthesis; L-threonine biosynthesis; L-threonine from L-aspartate: step 2/5. Its function is as follows. Catalyzes the NADPH-dependent formation of L-aspartate-semialdehyde (L-ASA) by the reductive dephosphorylation of L-aspartyl-4-phosphate. This chain is Aspartate-semialdehyde dehydrogenase, found in Mycobacterium bovis (strain ATCC BAA-935 / AF2122/97).